The chain runs to 106 residues: Large ribosomal subunit protein uL24 (106 aa).

Residues 69 to 106 (SNLNPVDPKTGKATRVGRKVSSEGTLVRYSKKSGEEIK) form a disordered region.

It belongs to the universal ribosomal protein uL24 family. Part of the 50S ribosomal subunit.

In terms of biological role, one of two assembly initiator proteins, it binds directly to the 5'-end of the 23S rRNA, where it nucleates assembly of the 50S subunit. Functionally, one of the proteins that surrounds the polypeptide exit tunnel on the outside of the subunit. This chain is Large ribosomal subunit protein uL24, found in Bacteroides fragilis (strain ATCC 25285 / DSM 2151 / CCUG 4856 / JCM 11019 / LMG 10263 / NCTC 9343 / Onslow / VPI 2553 / EN-2).